Consider the following 211-residue polypeptide: Redox-sensing transcriptional repressor Rex (211 aa).

A DNA-binding region (H-T-H motif) is located at residues 17–56 (KYHRYLEELLRNEVDRISSKELSKKIGFTASQIRQDFNCF). 91-96 (GGGNIG) contacts NAD(+).

The protein belongs to the transcriptional regulatory Rex family. As to quaternary structure, homodimer.

The protein resides in the cytoplasm. In terms of biological role, modulates transcription in response to changes in cellular NADH/NAD(+) redox state. The protein is Redox-sensing transcriptional repressor Rex of Clostridium tetani (strain Massachusetts / E88).